The primary structure comprises 313 residues: Protein FixB (313 aa).

255–283 (LYLAVGISGQIQHMVGANASQTIFAINKD) contacts FAD.

This sequence belongs to the ETF alpha-subunit/FixB family. As to quaternary structure, heterodimer of FixA and FixB.

It functions in the pathway amine and polyamine metabolism; carnitine metabolism. In terms of biological role, required for anaerobic carnitine reduction. May bring reductant to CaiA. This chain is Protein FixB, found in Escherichia coli O127:H6 (strain E2348/69 / EPEC).